We begin with the raw amino-acid sequence, 507 residues long: ATP synthase subunit alpha, chloroplastic (507 aa).

ATP is bound at residue 170–177 (GDRQTGKT).

The protein belongs to the ATPase alpha/beta chains family. As to quaternary structure, F-type ATPases have 2 components, CF(1) - the catalytic core - and CF(0) - the membrane proton channel. CF(1) has five subunits: alpha(3), beta(3), gamma(1), delta(1), epsilon(1). CF(0) has four main subunits: a, b, b' and c.

The protein localises to the plastid. It localises to the chloroplast thylakoid membrane. It catalyses the reaction ATP + H2O + 4 H(+)(in) = ADP + phosphate + 5 H(+)(out). Produces ATP from ADP in the presence of a proton gradient across the membrane. The alpha chain is a regulatory subunit. The protein is ATP synthase subunit alpha, chloroplastic of Nicotiana tomentosiformis (Tobacco).